The chain runs to 373 residues: Dual-specificity RNA methyltransferase RlmN (373 aa).

The active-site Proton acceptor is the glutamate 101. Residues 107–350 (ENKRTTLCVS…TIIRKIRGAD (244 aa)) form the Radical SAM core domain. Cysteine 114 and cysteine 355 are oxidised to a cystine. [4Fe-4S] cluster contacts are provided by cysteine 121, cysteine 125, and cysteine 128. Residues 179 to 180 (GE), serine 211, 233 to 235 (SLH), and asparagine 312 each bind S-adenosyl-L-methionine. Catalysis depends on cysteine 355, which acts as the S-methylcysteine intermediate.

This sequence belongs to the radical SAM superfamily. RlmN family. [4Fe-4S] cluster is required as a cofactor.

It localises to the cytoplasm. It carries out the reaction adenosine(2503) in 23S rRNA + 2 reduced [2Fe-2S]-[ferredoxin] + 2 S-adenosyl-L-methionine = 2-methyladenosine(2503) in 23S rRNA + 5'-deoxyadenosine + L-methionine + 2 oxidized [2Fe-2S]-[ferredoxin] + S-adenosyl-L-homocysteine. The catalysed reaction is adenosine(37) in tRNA + 2 reduced [2Fe-2S]-[ferredoxin] + 2 S-adenosyl-L-methionine = 2-methyladenosine(37) in tRNA + 5'-deoxyadenosine + L-methionine + 2 oxidized [2Fe-2S]-[ferredoxin] + S-adenosyl-L-homocysteine. Its function is as follows. Specifically methylates position 2 of adenine 2503 in 23S rRNA and position 2 of adenine 37 in tRNAs. m2A2503 modification seems to play a crucial role in the proofreading step occurring at the peptidyl transferase center and thus would serve to optimize ribosomal fidelity. The chain is Dual-specificity RNA methyltransferase RlmN from Blochmanniella pennsylvanica (strain BPEN).